The following is a 157-amino-acid chain: Succinate dehydrogenase assembly factor 2-A, mitochondrial (157 aa).

The transit peptide at 1 to 21 (MLRQVLSSTSVRRLLVSPTRC) directs the protein to the mitochondrion.

Belongs to the SDHAF2 family. As to quaternary structure, interacts with the flavoprotein subunit within the SDH catalytic dimer.

It is found in the mitochondrion matrix. In terms of biological role, plays an essential role in the assembly of succinate dehydrogenase (SDH), an enzyme complex (also referred to as respiratory complex II) that is a component of both the tricarboxylic acid (TCA) cycle and the mitochondrial electron transport chain, and which couples the oxidation of succinate to fumarate with the reduction of ubiquinone (coenzyme Q) to ubiquinol. Required for flavinylation (covalent attachment of FAD) of the flavoprotein subunit of the SDH catalytic dimer. This is Succinate dehydrogenase assembly factor 2-A, mitochondrial from Drosophila mojavensis (Fruit fly).